Reading from the N-terminus, the 507-residue chain is Probable aldehyde dehydrogenase (507 aa).

An NAD(+)-binding site is contributed by 219–225 (GFGAEAG). Residues Glu263 and Cys302 contribute to the active site.

This sequence belongs to the aldehyde dehydrogenase family.

The enzyme catalyses an aldehyde + NAD(+) + H2O = a carboxylate + NADH + 2 H(+). The protein is Probable aldehyde dehydrogenase of Mycobacterium bovis (strain ATCC BAA-935 / AF2122/97).